The primary structure comprises 545 residues: CTP synthase (545 aa).

Residues 1–265 (MNGIKHIFIT…DKFVIKHLDL (265 aa)) form an amidoligase domain region. Position 15 (Ser15) interacts with CTP. Ser15 provides a ligand contact to UTP. Residues 16–21 (SIGKGL) and Asp73 contribute to the ATP site. Residues Asp73 and Glu141 each contribute to the Mg(2+) site. Residues 148–150 (DIE), 188–193 (KTKPTQ), and Lys224 each bind CTP. Residues 188–193 (KTKPTQ) and Lys224 each bind UTP. One can recognise a Glutamine amidotransferase type-1 domain in the interval 290-534 (EIAIIGKYTG…VAAALARKEI (245 aa)). Gly349 serves as a coordination point for L-glutamine. The active-site Nucleophile; for glutamine hydrolysis is the Cys376. Residues 377 to 380 (LGMQ), Glu400, and Arg460 each bind L-glutamine. Catalysis depends on residues His507 and Glu509.

Belongs to the CTP synthase family. Homotetramer.

The enzyme catalyses UTP + L-glutamine + ATP + H2O = CTP + L-glutamate + ADP + phosphate + 2 H(+). It carries out the reaction L-glutamine + H2O = L-glutamate + NH4(+). The catalysed reaction is UTP + NH4(+) + ATP = CTP + ADP + phosphate + 2 H(+). Its pathway is pyrimidine metabolism; CTP biosynthesis via de novo pathway; CTP from UDP: step 2/2. With respect to regulation, allosterically activated by GTP, when glutamine is the substrate; GTP has no effect on the reaction when ammonia is the substrate. The allosteric effector GTP functions by stabilizing the protein conformation that binds the tetrahedral intermediate(s) formed during glutamine hydrolysis. Inhibited by the product CTP, via allosteric rather than competitive inhibition. Functionally, catalyzes the ATP-dependent amination of UTP to CTP with either L-glutamine or ammonia as the source of nitrogen. Regulates intracellular CTP levels through interactions with the four ribonucleotide triphosphates. This Tropheryma whipplei (strain TW08/27) (Whipple's bacillus) protein is CTP synthase.